We begin with the raw amino-acid sequence, 352 residues long: Peptide chain release factor 1 (352 aa).

Gln-233 bears the N5-methylglutamine mark. A disordered region spans residues 288–309 (NAKDRKEQVGSGDRSERIRTYN). The span at 289–306 (AKDRKEQVGSGDRSERIR) shows a compositional bias: basic and acidic residues.

The protein belongs to the prokaryotic/mitochondrial release factor family. Methylated by PrmC. Methylation increases the termination efficiency of RF1.

It is found in the cytoplasm. In terms of biological role, peptide chain release factor 1 directs the termination of translation in response to the peptide chain termination codons UAG and UAA. This Helicobacter pylori (strain HPAG1) protein is Peptide chain release factor 1.